Consider the following 1164-residue polypeptide: DNA-directed RNA polymerase 133 kDa polypeptide (1164 aa).

Belongs to the RNA polymerase beta chain family. In terms of assembly, the DNA-dependent RNA polymerase used for intermediate and late genes expression consists of eight subunits 147 kDa, 133 kDa, 35 kDa, 30 kDa, 22 kDa, 19 kDa, 18 kDa and 7 kDa totalling more than 500 kDa in mass. The same holoenzyme, with the addition of the transcription-specificity factor RAP94, is used for early gene expression.

The protein localises to the virion. The catalysed reaction is RNA(n) + a ribonucleoside 5'-triphosphate = RNA(n+1) + diphosphate. Its function is as follows. Part of the DNA-dependent RNA polymerase which catalyzes the transcription of viral DNA into RNA using the four ribonucleoside triphosphates as substrates. Responsible for the transcription of early, intermediate and late genes. DNA-dependent RNA polymerase associates with the early transcription factor (ETF), itself composed of OPG118 and OPG133, thereby allowing the early genes transcription. Late transcription, and probably also intermediate transcription, require newly synthesized RNA polymerase. The polypeptide is DNA-directed RNA polymerase 133 kDa polypeptide (OPG151) (Homo sapiens (Human)).